Here is a 134-residue protein sequence, read N- to C-terminus: DWDKVIAVNLKGTFLVTQAAGQALVSSGCSGSIINISSIVGKVGNMGQTNYAASKAGVIGLTQTAARELGRHGIRCNSVLPGFIATPMTQKVPQKVMNKITGMIPMGHLGDPEDVADVVAFLASEDSGYITGAS.

Serine 38 contacts substrate. The residue at position 42 (lysine 42) is an N6-succinyllysine. The active-site Proton acceptor is tyrosine 51. Residues 51–55 and 84–86 contribute to the NAD(+) site; these read YAASK and IAT. An N6-succinyllysine modification is found at lysine 55.

The protein belongs to the short-chain dehydrogenases/reductases (SDR) family. Heterotetramer with CBR4; contains two molecules of HSD17B8 and CBR4.

Its subcellular location is the mitochondrion matrix. The enzyme catalyses 17beta-estradiol + NAD(+) = estrone + NADH + H(+). It carries out the reaction 17beta-estradiol + NADP(+) = estrone + NADPH + H(+). The catalysed reaction is testosterone + NAD(+) = androst-4-ene-3,17-dione + NADH + H(+). It participates in steroid biosynthesis; estrogen biosynthesis. It functions in the pathway lipid metabolism; fatty acid biosynthesis. Its function is as follows. NAD-dependent 17-beta-hydroxysteroid dehydrogenase with highest activity towards estradiol. Has very low activity towards testosterone. The heterotetramer with CBR4 has NADH-dependent 3-ketoacyl-acyl carrier protein reductase activity, and thereby plays a role in mitochondrial fatty acid biosynthesis. Within the heterotetramer, HSD17B8 binds NADH; CBR4 binds NADPD. The sequence is that of Estradiol 17-beta-dehydrogenase 8 (HSD17B8) from Callithrix jacchus (White-tufted-ear marmoset).